A 140-amino-acid polypeptide reads, in one-letter code: Protein KRTCAP2 homolog (140 aa).

4 helical membrane passes run 11–31 (LLSS…LRFC), 40–60 (LNVL…LTCV), 74–94 (AKLV…AGIV), and 98–118 (CATT…RISI).

Belongs to the KRTCAP2 family. As to quaternary structure, component of the oligosaccharyltransferase (OST) complex.

The protein localises to the membrane. Subunit of the oligosaccharyl transferase (OST) complex that catalyzes the initial transfer of a defined glycan (Glc(3)Man(9)GlcNAc(2) in eukaryotes) from the lipid carrier dolichol-pyrophosphate to an asparagine residue within an Asn-X-Ser/Thr consensus motif in nascent polypeptide chains, the first step in protein N-glycosylation. N-glycosylation occurs cotranslationally and the complex associates with the Sec61 complex at the channel-forming translocon complex that mediates protein translocation across the endoplasmic reticulum (ER). All subunits are required for a maximal enzyme activity. In Drosophila pseudoobscura pseudoobscura (Fruit fly), this protein is Protein KRTCAP2 homolog.